A 1427-amino-acid polypeptide reads, in one-letter code: Double-stranded DNA deaminase toxin A (1427 aa).

The next 2 membrane-spanning stretches (helical) occupy residues 16 to 36 (ALAGFLVGAVLGIALIAAVAF) and 43 to 63 (FGVALLAGMMAGIGAQALLSI). YD repeat units follow at residues 469–501 (RVVETHTSEGENWTFEYDVAGRQTRVRHADGRT), 548–584 (YDDAGRIIAETDPLGRTTRTRYDGNSLRPVEVVGPDG), 720–747 (NARGQLIEAVDPAGRRVQYRYDVEGRLR), and 977–1008 (YDGAGDLIETSDSLRGSTRFSYDPAGRLISRA). The segment at 1264–1427 (IGLNGGANVY…SPKSPTKGGC (164 aa)) is C-terminal effector domain, has cytidine deaminase activity. Residues His-1345, Cys-1373, and Cys-1376 each coordinate Zn(2+). The interval 1402 to 1427 (KRGATGETKVFTGNSNSPKSPTKGGC) is disordered. Positions 1412–1421 (FTGNSNSPKS) are enriched in polar residues.

This sequence belongs to the RHS/WapA nuclease family. The toxic domain forms a 1:1 complex with the DddI immunity protein.

The protein localises to the membrane. The enzyme catalyses a 2'-deoxycytidine in double-stranded DNA + H2O + H(+) = a 2'-deoxyuridine in double-stranded DNA + NH4(+). Toxic component of a toxin-immunity protein module, which functions as a cellular contact-dependent growth inhibition (CDI) system. CDI modules allow bacteria to communicate with and inhibit the growth of closely related neighboring bacteria in a contact-dependent fashion. Bacteria that have this module inhibit or kill bacteria without it, giving them a growth advantage. Probably specifically inhibited by cognate immunity protein DddI. The C-terminal 163 residue fragment has double-stranded DNA cytidine deaminase activity; it does not deaminate ssDNA, ssRNA or dsRNA. Leads to C:G to T:A conversions in deaminated DNA. Preferentially deaminates 5'-TC-3' substrates. This is Double-stranded DNA deaminase toxin A from Burkholderia cenocepacia (strain H111).